The sequence spans 318 residues: Methionyl-tRNA formyltransferase (318 aa).

112–115 (SILP) lines the (6S)-5,6,7,8-tetrahydrofolate pocket.

The protein belongs to the Fmt family.

It catalyses the reaction L-methionyl-tRNA(fMet) + (6R)-10-formyltetrahydrofolate = N-formyl-L-methionyl-tRNA(fMet) + (6S)-5,6,7,8-tetrahydrofolate + H(+). Attaches a formyl group to the free amino group of methionyl-tRNA(fMet). The formyl group appears to play a dual role in the initiator identity of N-formylmethionyl-tRNA by promoting its recognition by IF2 and preventing the misappropriation of this tRNA by the elongation apparatus. The polypeptide is Methionyl-tRNA formyltransferase (Haemophilus influenzae (strain ATCC 51907 / DSM 11121 / KW20 / Rd)).